We begin with the raw amino-acid sequence, 556 residues long: Dihydroxy-acid dehydratase (556 aa).

Residue cysteine 47 participates in [2Fe-2S] cluster binding. A Mg(2+)-binding site is contributed by aspartate 79. Cysteine 120 serves as a coordination point for [2Fe-2S] cluster. Residues aspartate 121 and lysine 122 each contribute to the Mg(2+) site. N6-carboxylysine is present on lysine 122. Cysteine 192 is a binding site for [2Fe-2S] cluster. Residue glutamate 444 participates in Mg(2+) binding. The active-site Proton acceptor is serine 470.

Belongs to the IlvD/Edd family. Homodimer. [2Fe-2S] cluster serves as cofactor. Mg(2+) is required as a cofactor.

It catalyses the reaction (2R)-2,3-dihydroxy-3-methylbutanoate = 3-methyl-2-oxobutanoate + H2O. The enzyme catalyses (2R,3R)-2,3-dihydroxy-3-methylpentanoate = (S)-3-methyl-2-oxopentanoate + H2O. The protein operates within amino-acid biosynthesis; L-isoleucine biosynthesis; L-isoleucine from 2-oxobutanoate: step 3/4. Its pathway is amino-acid biosynthesis; L-valine biosynthesis; L-valine from pyruvate: step 3/4. Its function is as follows. Functions in the biosynthesis of branched-chain amino acids. Catalyzes the dehydration of (2R,3R)-2,3-dihydroxy-3-methylpentanoate (2,3-dihydroxy-3-methylvalerate) into 2-oxo-3-methylpentanoate (2-oxo-3-methylvalerate) and of (2R)-2,3-dihydroxy-3-methylbutanoate (2,3-dihydroxyisovalerate) into 2-oxo-3-methylbutanoate (2-oxoisovalerate), the penultimate precursor to L-isoleucine and L-valine, respectively. This Prochlorococcus marinus (strain MIT 9313) protein is Dihydroxy-acid dehydratase.